Here is a 192-residue protein sequence, read N- to C-terminus: UPF0312 protein PFLU_5725 (192 aa).

A signal peptide spans 1–23 (MLKKTLAALAIGTALLSAGQVMA).

The protein belongs to the UPF0312 family. Type 1 subfamily.

Its subcellular location is the periplasm. In Pseudomonas fluorescens (strain SBW25), this protein is UPF0312 protein PFLU_5725.